The following is an 88-amino-acid chain: MGTARFLSAVLLLSVLLMVTFPALLSAEYHDGRVDICSLPYDSGDCLRFFEMWYFDGTTCTKFVYGGYGGNDNRFPTEKACMKRCAKA.

Positions 1–27 (MGTARFLSAVLLLSVLLMVTFPALLSA) are cleaved as a signal peptide. Positions 28–33 (EYHDGR) are excised as a propeptide. A BPTI/Kunitz inhibitor domain is found at 37 to 85 (CSLPYDSGDCLRFFEMWYFDGTTCTKFVYGGYGGNDNRFPTEKACMKRC). Intrachain disulfides connect Cys37/Cys85 and Cys60/Cys81.

Belongs to the venom Kunitz-type family. 03 (sub-Kunitz) subfamily. As to expression, expressed by the venom gland.

It is found in the secreted. In terms of biological role, serine protease inhibitor that inhibits trypsin at a molar ratio of 1:1. This Cyriopagopus schmidti (Chinese bird spider) protein is Kunitz-type U15-theraphotoxin-Hs1b.